Here is a 276-residue protein sequence, read N- to C-terminus: Insulin-induced gene 1 protein (276 aa).

Disordered regions lie at residues 1-26 and 49-73; these read MPRL…PRAS and AAHG…QGSS. Residues 1–83 are Cytoplasmic-facing; that stretch reads MPRLDDHLWR…SHVNSWHHHL (83 aa). Residues 16–25 are compositionally biased toward basic residues; the sequence is GTKHRSHPRA. Residues 84–106 form a helical membrane-spanning segment; the sequence is VQRSLVLFSVGVVLALVLNLLQV. The Extracellular segment spans residues 107–125; that stretch reads QRNVTLFPDEVIATIFSSA. Residues 126–143 form a helical membrane-spanning segment; sequence WWVPPCCGTAAAVVGLLY. At 144-158 the chain is on the cytoplasmic side; sequence PCIDSHLGEPHKFKR. Glycyl lysine isopeptide (Lys-Gly) (interchain with G-Cter in ubiquitin) cross-links involve residues K155 and K157. Residues 159-181 form a helical membrane-spanning segment; the sequence is EWASVMRCVAVFVGINHASAKLD. Residues 182 to 184 are Extracellular-facing; sequence FAN. The chain crosses the membrane as a helical span at residues 185-203; sequence NVQLSLTLAALSLGLWWTF. Topologically, residues 204 to 208 are cytoplasmic; sequence DRSRS. S206 is modified (phosphoserine). A helical transmembrane segment spans residues 209 to 230; sequence GLGLGITIAFLATLITQLLVYN. Topologically, residues 231-244 are extracellular; that stretch reads GVYQYTSPDFLYIR. Residues 245 to 262 traverse the membrane as a helical segment; sequence SWLPCIFFSGGVTVGNIG. Topologically, residues 263 to 276 are cytoplasmic; that stretch reads RQLAMGVPEKPHSD. A KxHxx motif is present at residues 270–276; that stretch reads PEKPHSD.

This sequence belongs to the INSIG family. Interacts with SCAP; interaction is direct and only takes place in the presence of sterols; it prevents interaction between SCAP and the coat protein complex II (COPII). Associates with the SCAP-SREBP complex (composed of SCAP and SREBF1/SREBP1 or SREBF2/SREBP2); association is mediated via its interaction with SCAP and only takes place in the presence of sterols. Interaction with SCAP is mutually exclusive with PAQR3. Interacts with HMGCR (via its SSD); the interaction, accelerated by sterols, leads to the recruitment of HMGCR to AMFR/gp78 for its ubiquitination by the sterol-mediated ERAD pathway. Interacts with AMFR/gp78 (via its membrane domain); the interaction recruits HMCR at the ER membrane for its ubiquitination and degradation by the sterol-mediated ERAD pathway. Interacts with SOAT2/ACAT2; leading to promote recruitment of AMFR/gp78 and subsequent ubiquitination of SOAT2/ACAT2. Interacts with RNF139. Interacts with RNF145. Post-translationally, phosphorylation at Ser-206 by PCK1 reduces binding to oxysterol, disrupting the interaction between INSIG1 and SCAP, thereby promoting nuclear translocation of SREBP proteins (SREBF1/SREBP1 or SREBF2/SREBP2) and subsequent transcription of downstream lipogenesis-related genes. Ubiquitinated by AMFR/gp78 in response to sterol deprivation, leading to its degradation: when the SCAP-SREBP complex becomes dissociated from INSIG1, INSIG1 is then ubiquitinated and degraded in proteasomes. Although ubiquitination is required for rapid INSIG1 degradation, it is not required for release of the SCAP-SREBP complex. Ubiquitinated by RNF139.

The protein localises to the endoplasmic reticulum membrane. In terms of biological role, oxysterol-binding protein that mediates feedback control of cholesterol synthesis by controlling both endoplasmic reticulum to Golgi transport of SCAP and degradation of HMGCR. Acts as a negative regulator of cholesterol biosynthesis by mediating the retention of the SCAP-SREBP complex in the endoplasmic reticulum, thereby blocking the processing of sterol regulatory element-binding proteins (SREBPs) SREBF1/SREBP1 and SREBF2/SREBP2. Binds oxysterol, including 25-hydroxycholesterol, regulating interaction with SCAP and retention of the SCAP-SREBP complex in the endoplasmic reticulum. In presence of oxysterol, interacts with SCAP, retaining the SCAP-SREBP complex in the endoplasmic reticulum, thereby preventing SCAP from escorting SREBF1/SREBP1 and SREBF2/SREBP2 to the Golgi. Sterol deprivation or phosphorylation by PCK1 reduce oxysterol-binding, disrupting the interaction between INSIG1 and SCAP, thereby promoting Golgi transport of the SCAP-SREBP complex, followed by processing and nuclear translocation of SREBF1/SREBP1 and SREBF2/SREBP2. Also regulates cholesterol synthesis by regulating degradation of HMGCR: initiates the sterol-mediated ubiquitin-mediated endoplasmic reticulum-associated degradation (ERAD) of HMGCR via recruitment of the reductase to the ubiquitin ligases AMFR/gp78 and/or RNF139. Also regulates degradation of SOAT2/ACAT2 when the lipid levels are low: initiates the ubiquitin-mediated degradation of SOAT2/ACAT2 via recruitment of the ubiquitin ligases AMFR/gp78. The chain is Insulin-induced gene 1 protein from Bos taurus (Bovine).